We begin with the raw amino-acid sequence, 490 residues long: Angiopoietin-related protein 1 (490 aa).

The first 22 residues, 1–22 (MKAFVWTLSVLLFLLGSGHCKG), serve as a signal peptide directing secretion. A coiled-coil region spans residues 79 to 167 (ITRMDLENLK…LNVTTEMLKM (89 aa)). N-linked (GlcNAc...) asparagine glycosylation is found at N159 and N187. One can recognise a Fibrinogen C-terminal domain in the interval 270-490 (FINEGPFKDC…AVQMMIKPID (221 aa)). 2 disulfides stabilise this stretch: C279/C308 and C431/C444.

Its subcellular location is the secreted. In Mus musculus (Mouse), this protein is Angiopoietin-related protein 1 (Angptl1).